Reading from the N-terminus, the 132-residue chain is Group 2 truncated hemoglobin YjbI (132 aa).

The heme site is built by Thr45, Lys48, Tyr63, and His76.

It belongs to the truncated hemoglobin family. Group II subfamily. As to quaternary structure, monomer. Heme serves as cofactor.

In terms of biological role, hemoglobin-like protein that exhibits a low peroxidase activity. Its very high oxygen affinity may rule out the possibility that it is involved in oxygen transport. This Bacillus subtilis (strain 168) protein is Group 2 truncated hemoglobin YjbI (yjbI).